A 210-amino-acid chain; its full sequence is Large ribosomal subunit protein uL3 (210 aa).

The interval 126–150 is disordered; the sequence is VSATHGSHRNHRKPGSVGASSTPSR.

It belongs to the universal ribosomal protein uL3 family. As to quaternary structure, part of the 50S ribosomal subunit. Forms a cluster with proteins L14 and L19.

One of the primary rRNA binding proteins, it binds directly near the 3'-end of the 23S rRNA, where it nucleates assembly of the 50S subunit. This is Large ribosomal subunit protein uL3 from Tropheryma whipplei (strain TW08/27) (Whipple's bacillus).